Reading from the N-terminus, the 217-residue chain is GTP cyclohydrolase 1 (217 aa).

The Zn(2+) site is built by cysteine 109, histidine 112, and cysteine 180.

Belongs to the GTP cyclohydrolase I family. Toroid-shaped homodecamer, composed of two pentamers of five dimers.

It catalyses the reaction GTP + H2O = 7,8-dihydroneopterin 3'-triphosphate + formate + H(+). Its pathway is cofactor biosynthesis; 7,8-dihydroneopterin triphosphate biosynthesis; 7,8-dihydroneopterin triphosphate from GTP: step 1/1. This is GTP cyclohydrolase 1 from Aliivibrio fischeri (strain ATCC 700601 / ES114) (Vibrio fischeri).